We begin with the raw amino-acid sequence, 1209 residues long: Neural cell adhesion molecule L1-like protein (1209 aa).

An N-terminal signal peptide occupies residues 1 to 25 (MMELPLCGRGLILSLIFLLLKLSAA). Residues 26 to 1083 (EIPLSVQQVP…LYDDISTQGW (1058 aa)) are Extracellular-facing. Ig-like C2-type domains are found at residues 35 to 124 (PTIV…EEIE) and 128 to 223 (PGVP…MKLT). Disulfide bonds link cysteine 57-cysteine 109 and cysteine 153-cysteine 204. A glycan (N-linked (GlcNAc...) asparagine) is linked at asparagine 87. Asparagine 225 and asparagine 299 each carry an N-linked (GlcNAc...) asparagine glycan. Ig-like C2-type domains are found at residues 235-328 (PKLL…VTVE), 331-417 (PRWK…ANID), 423-510 (PLIK…ANLD), and 515-607 (TKLR…TQVT). 4 disulfide bridges follow: cysteine 262/cysteine 310, cysteine 352/cysteine 401, cysteine 445/cysteine 494, and cysteine 536/cysteine 591. N-linked (GlcNAc...) asparagine glycosylation occurs at asparagine 476. Residues 555–558 (DGEA) carry the DGEA motif. 2 N-linked (GlcNAc...) asparagine glycosylation sites follow: asparagine 562 and asparagine 580. Fibronectin type-III domains lie at 614–709 (PPGN…TPPA), 714–807 (NPQN…SGED), 812–914 (APVI…TPEG), and 918–1015 (QPSF…LGEG). Residues 696–717 (HASLPSDHHETPPAAPDKNPQN) are disordered. N-linked (GlcNAc...) asparagine glycans are attached at residues asparagine 767, asparagine 822, asparagine 945, and asparagine 1027. Residues 1084–1104 (FIGLMCAIALLTLILLTICFV) traverse the membrane as a helical segment. The Cytoplasmic segment spans residues 1105 to 1209 (KRNRGGKYSV…SSTATFPLRA (105 aa)). Residues 1115–1133 (KEKEDLHPDPEVQSAKDET) are compositionally biased toward basic and acidic residues. The interval 1115–1170 (KEKEDLHPDPEVQSAKDETFGEYSDSDEKPLKGSLRSLNRNMQPTESADSLVEYGE) is disordered. A phosphoserine mark is found at serine 1148, serine 1161, and serine 1181. Over residues 1150 to 1162 (RSLNRNMQPTESA) the composition is skewed to polar residues. An FIG[AQ]Y motif is present at residues 1182–1186 (FIGAY).

It belongs to the immunoglobulin superfamily. L1/neurofascin/NgCAM family. In terms of assembly, may interact with L1CAM. May interact with ITGB1/ITGA1 heterodimer and ITGB1/ITGA2 heterodimer as well as with ANK3. Post-translationally, cleavage by metalloprotease ADAM8 in the extracellular part generates 2 soluble forms (125 kDa and 165 kDa) in vitro and is inhibited by metalloprotease inhibitors. In brain extracts, these two soluble forms are also present and are dramatically reduced in mice lacking ADAM8. Cleaved by BACE1. In terms of processing, N-glycosylated. Contains N-linked oligosaccharides with a sulfated carbohydrate structure type HNK-1 (SO4-3-GlcUABeta1,3GalBeta1,4GlcNAc). O-glycosylated. In terms of tissue distribution, expressed in the brain, in the cerebellum and in the spinal cord. Detected in the retina and the optic nerve. Expressed in neurons and glial cells in the central nervous system and by Schwann cells in the peripheral nervous system.

The protein localises to the cell membrane. Its subcellular location is the secreted. It is found in the extracellular space. It localises to the extracellular matrix. Its function is as follows. Extracellular matrix and cell adhesion protein that plays a role in nervous system development and in synaptic plasticity. Both soluble and membranous forms promote neurite outgrowth of cerebellar and hippocampal neurons and suppress neuronal cell death. Plays a role in neuronal positioning of pyramidal neurons as well as in regulation of both the number of interneurons and the efficacy of GABAergic synapses. May play a role in regulating cell migration in nerve regeneration and cortical development. Potentiates integrin-dependent cell migration towards extracellular matrix proteins. Recruits ANK3 to the plasma membrane. In Mus musculus (Mouse), this protein is Neural cell adhesion molecule L1-like protein (Chl1).